A 734-amino-acid chain; its full sequence is ATP-dependent RNA helicase SUV3L, mitochondrial (734 aa).

Residues 1–60 constitute a mitochondrion transit peptide; it reads MAAAAAIAAALLRRSTSSQHHRRILLLPLLSHLQRAAPRSPSPWDPPPHHRFFFSSDVTA. Residues 58 to 88 are disordered; sequence VTAEGDSKPRPPLDGKQLWREVSTSEPATGA. Residues 62–76 show a composition bias toward basic and acidic residues; it reads GDSKPRPPLDGKQLW. The Helicase ATP-binding domain maps to 198–356; the sequence is FARAMRRRVV…RFKPLVVEAK (159 aa). An ATP-binding site is contributed by 211 to 218; sequence GPTNSGKT. In terms of domain architecture, Helicase C-terminal spans 357–525; the sequence is TLLGDLKNVR…SFAIQFPDLT (169 aa). Residues asparagine 594 and asparagine 614 are each glycosylated (N-linked (GlcNAc...) asparagine). The interval 667–734 is disordered; the sequence is ASWKPTSRQQ…QDPSSLNFVA (68 aa). Over residues 684–693 the composition is skewed to acidic residues; sequence EEDNDVEQAS. Positions 695–709 are enriched in basic and acidic residues; that stretch reads DNAKNDSEDGYERSI. N-linked (GlcNAc...) asparagine glycosylation is present at asparagine 699. Over residues 725–734 the composition is skewed to polar residues; it reads QDPSSLNFVA.

This sequence belongs to the helicase family. In terms of assembly, homodimer; in free form. Component of the mitochondrial degradosome (mtEXO) complex which is a heteropentamer containing 2 copies of SUPV3L1 and 3 copies of PNPT1. The cofactor is Mg(2+). It depends on Mn(2+) as a cofactor.

Its subcellular location is the nucleus. The protein resides in the mitochondrion matrix. It is found in the mitochondrion nucleoid. It carries out the reaction ATP + H2O = ADP + phosphate + H(+). Functionally, major helicase player in mitochondrial RNA metabolism. Component of the mitochondrial degradosome (mtEXO) complex, that degrades 3' overhang double-stranded RNA with a 3'-to-5' directionality in an ATP-dependent manner. ATPase and ATP-dependent multisubstrate helicase, able to unwind double-stranded (ds) DNA and RNA, and RNA/DNA heteroduplexes in the 5'-to-3' direction. Plays a role in the RNA surveillance system in mitochondria; regulates the stability of mature mRNAs, the removal of aberrantly formed mRNAs and the rapid degradation of non coding processing intermediates. Confers salinity and drought stress tolerances by maintaining both photosynthesis and antioxidant machinery, probably via an increase in plant hormones levels such as gibberellic acid (GA(3)), the cytokinin zeatin (Z) and indole-3-acetic acid (IAA). The protein is ATP-dependent RNA helicase SUV3L, mitochondrial of Oryza sativa subsp. japonica (Rice).